The sequence spans 844 residues: Beta-mannosidase B (844 aa).

Glu-432 (proton donor) is an active-site residue.

The protein belongs to the glycosyl hydrolase 2 family. Beta-mannosidase B subfamily.

The enzyme catalyses Hydrolysis of terminal, non-reducing beta-D-mannose residues in beta-D-mannosides.. It functions in the pathway glycan metabolism; N-glycan degradation. Functionally, exoglycosidase that cleaves the single beta-linked mannose residue from the non-reducing end of beta-mannosidic oligosaccharides of various complexity and length. Prefers mannobiose over mannotriose and has no activity against polymeric mannan. Is also severely restricted by galactosyl substitutions at the +1 subsite. The protein is Beta-mannosidase B (mndB) of Aspergillus oryzae (strain ATCC 42149 / RIB 40) (Yellow koji mold).